The primary structure comprises 1342 residues: DNA-directed RNA polymerase subunit beta (1342 aa).

This sequence belongs to the RNA polymerase beta chain family. The RNAP catalytic core consists of 2 alpha, 1 beta, 1 beta' and 1 omega subunit. When a sigma factor is associated with the core the holoenzyme is formed, which can initiate transcription.

It carries out the reaction RNA(n) + a ribonucleoside 5'-triphosphate = RNA(n+1) + diphosphate. Its function is as follows. DNA-dependent RNA polymerase catalyzes the transcription of DNA into RNA using the four ribonucleoside triphosphates as substrates. The protein is DNA-directed RNA polymerase subunit beta of Erwinia tasmaniensis (strain DSM 17950 / CFBP 7177 / CIP 109463 / NCPPB 4357 / Et1/99).